Here is a 533-residue protein sequence, read N- to C-terminus: MCYSLSIQSSIDFHNRNALKIHGDRAILTSNLPTLRRIPFLPERDRRRKLVLCTGRVVNSLKFTGNTSVDLCGIPRHRLRVSCSDARRTPEETAAELTAQPNFSEFITSERVKVVAMLALALALCNADRVVMSVAIVPLSLSRGWSKSFSGIVQSSFLWGYLISPIAGGTLVDRYGGKVVMAWGVALWSLATFLTPWAADSSLWALLAARAMVGVAEGVALPCMNNMVARWFPPTERSRAVGIAMAGFQLGNVVGLMLSPILMSQGGIYGPFVIFGLSGFLWLLVWLSATSSAPDRHPQITKSELEYIKQKKQISTMENKRISTSGIPPFGRLLSKMPTWAVIVANSMHSWGFFVILSWMPIYFNSVYHVNLKQAAWFSAVPWSMMAFTGYIAGFWSDLLIRRGTSITLTRKIMQSIGFIGPGIALIGLTTAKQPLVASAWLSLAVGLKSFSHLGFLINLQEIAPEYSGVLHGMCLTAGTLAAIVGTVGAGFFVELLGSFQGFILLTAILYLLSALFYNIYATGERVDFDTTA.

Transmembrane regions (helical) follow at residues 117–137, 152–172, 179–199, 203–223, 243–263, 267–287, 342–362, 376–396, 417–437, 438–458, 474–494, and 502–522; these read MLAL…VAIV, IVQS…GTLV, VVMA…PWAA, LWAL…ALPC, IAMA…PILM, GIYG…LVWL, VIVA…WMPI, AWFS…AGFW, IGFI…QPLV, ASAW…GFLI, MCLT…GFFV, and GFIL…NIYA.

This sequence belongs to the major facilitator superfamily. Sodium/anion cotransporter (TC 2.A.1.14) family. Expressed in leaf veins and root tips.

It localises to the plastid. It is found in the chloroplast membrane. Its function is as follows. Inorganic phosphate and probable anion transporter. This chain is Probable anion transporter 4, chloroplastic (ANTR4), found in Arabidopsis thaliana (Mouse-ear cress).